The sequence spans 121 residues: Ribosome-binding factor A (121 aa).

Belongs to the RbfA family. In terms of assembly, monomer. Binds 30S ribosomal subunits, but not 50S ribosomal subunits or 70S ribosomes.

It is found in the cytoplasm. In terms of biological role, one of several proteins that assist in the late maturation steps of the functional core of the 30S ribosomal subunit. Associates with free 30S ribosomal subunits (but not with 30S subunits that are part of 70S ribosomes or polysomes). Required for efficient processing of 16S rRNA. May interact with the 5'-terminal helix region of 16S rRNA. The chain is Ribosome-binding factor A from Finegoldia magna (strain ATCC 29328 / DSM 20472 / WAL 2508) (Peptostreptococcus magnus).